The sequence spans 521 residues: FAD-dependent monooxygenase DEP2 (521 aa).

Residues 1–22 (MHDSPPFKVIIVGAGVTGLTLA) form the signal peptide. Aspartate 36 and arginine 109 together coordinate FAD. Residues asparagine 139 and asparagine 220 are each glycosylated (N-linked (GlcNAc...) asparagine). FAD is bound by residues aspartate 310 and glycine 323. A helical transmembrane segment spans residues 477 to 497 (ILVLWAGLWLAICFFHLVFSG). Asparagine 515 carries an N-linked (GlcNAc...) asparagine glycan.

Belongs to the paxM FAD-dependent monooxygenase family. FAD is required as a cofactor.

Its subcellular location is the membrane. The protein operates within polyketide biosynthesis. Functionally, part of the gene cluster that mediates the biosynthesis of depudecin, a highly oxidized eleven-carbon linear polyketide that acts as a histone deacetylase (HDAC) inhibitor and makes a small contribution to pathogenesis. The reducing polyketide synthase DEP5 is the central enzyme in depudecin biosynthesis by yielding the backbone polyketide chain. The monooxygenases DEP2 and DEP4, as well as the uncharacterized protein DEP1, then act as tailoring enzymes to modify the intermediate polyketide chain into depudecin. This chain is FAD-dependent monooxygenase DEP2, found in Fusarium langsethiae.